Here is a 95-residue protein sequence, read N- to C-terminus: Bombyxin C-2 (95 aa).

The first 19 residues, 1 to 19 (MKLVILLVVVSAMLVLGGA), serve as a signal peptide directing secretion. Pyrrolidone carboxylic acid is present on Gln20. Disulfide bonds link Cys27–Cys76, Cys39–Cys89, and Cys75–Cys80. Residues 47–67 (SGSQYAGYGWPWLPPFSSSRG) constitute a propeptide, c peptide like.

Belongs to the insulin family. As to quaternary structure, heterodimer of a B chain and an A chain linked by two disulfide bonds.

It is found in the secreted. Functionally, brain peptide responsible for activation of prothoracic glands to produce ecdysone in insects. The protein is Bombyxin C-2 (BBXC2) of Bombyx mori (Silk moth).